Consider the following 166-residue polypeptide: Small ribosomal subunit protein uS5 (166 aa).

Residues 11–74 (LQEKLVAVNR…EQARRNMVKV (64 aa)) form the S5 DRBM domain.

The protein belongs to the universal ribosomal protein uS5 family. In terms of assembly, part of the 30S ribosomal subunit. Contacts proteins S4 and S8.

Its function is as follows. With S4 and S12 plays an important role in translational accuracy. Functionally, located at the back of the 30S subunit body where it stabilizes the conformation of the head with respect to the body. This Tolumonas auensis (strain DSM 9187 / NBRC 110442 / TA 4) protein is Small ribosomal subunit protein uS5.